Here is a 471-residue protein sequence, read N- to C-terminus: Meiosis-specific with OB domain-containing protein (471 aa).

A DNA-binding region (OB) is located at residues 167 to 272 (IINVLAAVKS…EANILLNFIR (106 aa)).

This sequence belongs to the MEIOB family. Component of a multiprotein complex with RPA2 and SPATA22. Interacts with SPATA22. Interacts with the complex BRME1:HSF2BP:BRCA2.

It is found in the cytoplasm. The protein resides in the nucleus. The protein localises to the chromosome. Functionally, single-stranded DNA-binding protein required for homologous recombination in meiosis I. Required for double strand breaks (DSBs) repair and crossover formation and promotion of faithful and complete synapsis. Not required for the initial loading of recombinases but required to maintain a proper number of RAD51 and DMC1 foci after the zygotene stage. May act by ensuring the stabilization of recombinases, which is required for successful homology search and meiotic recombination. Displays Single-stranded DNA 3'-5' exonuclease activity in vitro. The chain is Meiosis-specific with OB domain-containing protein (MEIOB) from Macaca fascicularis (Crab-eating macaque).